The sequence spans 717 residues: Myc proto-oncogene protein (717 aa).

Thr-217 carries the post-translational modification Phosphothreonine. The residue at position 220 (Ser-220) is a Phosphoserine. 3 disordered regions span residues 288–376 (LNQH…KNNS), 462–535 (TPAS…LKDP), and 555–584 (HSSMMSKKSRGKKVVGTSSGNTSPISSGQD). Residues 298 to 311 (QQQLNQQQLDEQQQ) are compositionally biased toward low complexity. Positions 351-360 (KSGSNASITT) are enriched in polar residues. The segment covering 361-376 (NNNNSNNKNNKLKNNS) has biased composition (low complexity). Positions 462–488 (TPASSSPVKSVANSRYPSPSSTPYQNC) are enriched in polar residues. The span at 489–523 (SSASPSYSPLSVDSSNVSSSSSSSSSQSSFTTSSS) shows a compositional bias: low complexity. The tract at residues 625–638 (EKRNQHNDMERQRR) is basic motif. Residues 625-677 (EKRNQHNDMERQRRIGLKNLFEALKKQIPTIRDKERAPKVNILREAAKLCIQL) form the bHLH domain. Positions 639–677 (IGLKNLFEALKKQIPTIRDKERAPKVNILREAAKLCIQL) are helix-loop-helix motif.

This sequence belongs to the Myc transcription factor family. In terms of assembly, efficient DNA binding requires dimerization with another bHLH protein. Binds DNA as a heterodimer with Max. Interacts with ago. Interacts with lid. Part of a complex containing lid, Myc and ash2. Component of a complex with pont and rept. Interacts with puf. Interacts with wh/wuho; the interaction may be mediated by mei-P26 and may be involved in the regulation of ribosome biogenesis. Probably targeted for ubiquitination by the SFC ubiquitin ligase complex member ago, leading to its proteasomal degradation. As to expression, low levels detected throughout embryo before cellular blastoderm formation, particularly concentrated in pole plasm. Zygotic expression detected during cellular blastoderm stage in endodermal anlagen of anterior and posterior midgut at both poles. After gastrulation, expression detected in invaginating ventral furrow of mesoderm. Continued expression in anterior and posterior midgut and mesoderm during germband extension. During late germ-band retraction, expression remains detectable in fusing midgut and presumed developing somatic musculature.

The protein localises to the nucleus. Its subcellular location is the nucleolus. It is found in the cytoplasm. Its function is as follows. Participates in the regulation of gene transcription. Binds DNA in a non-specific manner, yet also specifically recognizes the core sequence CAC[GA]TG. Seems to activate the transcription of growth-related genes; required for cellular proliferation and growth. Functions in the TORC2-mediated regulation of cell growth, acting downstream of the TORC2 complex. Inhibits the demethylase activity of Lid. Activates transcription of mbm. Has a role in ribosome biogenesis and endoreplication in fat body cells by activating the transcription of LTV1. Able to induce the SCF E3 ubiquitin-protein ligase member archipelago (ago) which functions in its degradation. It may therefore create a negative feedback loop with ago that is regulated by the ubiquitin hydrolase puf. In dopaminergic neurons, regulates dopamine levels by binding to the E-box (E1) of the dopamine decarboxylase Ddc promoter and thereby inhibiting its transcription. This regulation is required to suppress male-male courtship. Involved in the acs and insulin signaling mediated non-cell-autonomous induction of amino acid release into the hemolymph following the cytoplasmic purge response to intestinal bacterial infection; required for efficient recovery of enterocyte thickness. This Drosophila melanogaster (Fruit fly) protein is Myc proto-oncogene protein.